The primary structure comprises 368 residues: Histidinol-phosphate aminotransferase (368 aa).

K224 is modified (N6-(pyridoxal phosphate)lysine).

The protein belongs to the class-II pyridoxal-phosphate-dependent aminotransferase family. Histidinol-phosphate aminotransferase subfamily. As to quaternary structure, homodimer. The cofactor is pyridoxal 5'-phosphate.

The catalysed reaction is L-histidinol phosphate + 2-oxoglutarate = 3-(imidazol-4-yl)-2-oxopropyl phosphate + L-glutamate. The protein operates within amino-acid biosynthesis; L-histidine biosynthesis; L-histidine from 5-phospho-alpha-D-ribose 1-diphosphate: step 7/9. The polypeptide is Histidinol-phosphate aminotransferase (Agrobacterium fabrum (strain C58 / ATCC 33970) (Agrobacterium tumefaciens (strain C58))).